A 298-amino-acid polypeptide reads, in one-letter code: Hydroxymethylglutaryl-CoA lyase, mitochondrial (298 aa).

One can recognise a Pyruvate carboxyltransferase domain in the interval 6–273 (VKVVEVGPRD…HTGVDLQKLM (268 aa)). Residue arginine 14 participates in substrate binding. A divalent metal cation is bound at residue aspartate 15. Lysine 21 carries the post-translational modification N6-acetyllysine. Histidine 206 and histidine 208 together coordinate a divalent metal cation. Residue cysteine 239 is part of the active site. A divalent metal cation is bound at residue asparagine 248. The Microbody targeting signal motif lies at 296–298 (CRL).

This sequence belongs to the HMG-CoA lyase family. Homodimer; disulfide-linked. Can also form homotetramers.

The protein localises to the mitochondrion matrix. It is found in the peroxisome. It carries out the reaction (3S)-3-hydroxy-3-methylglutaryl-CoA = acetoacetate + acetyl-CoA. It participates in metabolic intermediate metabolism; (S)-3-hydroxy-3-methylglutaryl-CoA degradation; acetoacetate from (S)-3-hydroxy-3-methylglutaryl-CoA: step 1/1. Mitochondrial 3-hydroxy-3-methylglutaryl-CoA lyase that catalyzes a cation-dependent cleavage of (S)-3-hydroxy-3-methylglutaryl-CoA into acetyl-CoA and acetoacetate, a key step in ketogenesis. Terminal step in leucine catabolism. Ketone bodies (beta-hydroxybutyrate, acetoacetate and acetone) are essential as an alternative source of energy to glucose, as lipid precursors and as regulators of metabolism. The protein is Hydroxymethylglutaryl-CoA lyase, mitochondrial (HMGCL) of Gallus gallus (Chicken).